Here is a 510-residue protein sequence, read N- to C-terminus: Flavonoid 3',5'-hydroxylase (510 aa).

A heme-binding site is contributed by Cys-447.

Belongs to the cytochrome P450 family. Heme is required as a cofactor.

It catalyses the reaction a 3',5'-unsubstituted flavanone + 2 reduced [NADPH--hemoprotein reductase] + 2 O2 = a 3',5'-dihydroxyflavanone + 2 oxidized [NADPH--hemoprotein reductase] + 2 H2O + 2 H(+). It functions in the pathway pigment biosynthesis; anthocyanin biosynthesis. Its function is as follows. Catalyzes the 3'5'-hydroxylation of naringenin and eriodictyol to form 5,7,3,'4',5'-pentahydroxyflavanone and 3',5'-hydroxylation of dihydrokaempferol and dihydroquercetin to form dihydromyricetin. This chain is Flavonoid 3',5'-hydroxylase (CYP75A7), found in Eustoma exaltatum subsp. russellianum (Bluebells).